The following is a 222-amino-acid chain: MSRKEKELKEYIEKSLKEFETDDSSMVVEYIFGIISDSSSNDDEKKESISEFLESLTEKDSTSFCNEMLIRHKEIIDDKETENKLKLTNLKLEQELKIKETTQSEINEEEKYENPYHKMSREEQKKRDALLSKYGYDEEDVDENGDIILSDHIEKKKIEDNKIESGLGENLNAKRIADEEKAKREKSKIEHQKKVQRDKEALEKQKRDEEKKKTVKKEKRRL.

Positions 80–111 (ETENKLKLTNLKLEQELKIKETTQSEINEEEK) form a coiled coil. Disordered stretches follow at residues 102–126 (TQSEINEEEKYENPYHKMSREEQKK) and 159–222 (EDNK…KRRL). Basic and acidic residues-rich tracts occupy residues 112–126 (YENPYHKMSREEQKK) and 175–212 (RIADEEKAKREKSKIEHQKKVQRDKEALEKQKRDEEKK). The stretch at 168–222 (GENLNAKRIADEEKAKREKSKIEHQKKVQRDKEALEKQKRDEEKKKTVKKEKRRL) forms a coiled coil. The segment covering 213–222 (KTVKKEKRRL) has biased composition (basic residues).

Belongs to the CCDC43 family.

In Dictyostelium discoideum (Social amoeba), this protein is Coiled-coil domain-containing protein 43 homolog.